Consider the following 168-residue polypeptide: ATP synthase subunit b (168 aa).

A helical membrane pass occupies residues 11–31; the sequence is NTVLGNIIVVSGAFIILLVLL.

It belongs to the ATPase B chain family. In terms of assembly, F-type ATPases have 2 components, F(1) - the catalytic core - and F(0) - the membrane proton channel. F(1) has five subunits: alpha(3), beta(3), gamma(1), delta(1), epsilon(1). F(0) has three main subunits: a(1), b(2) and c(10-14). The alpha and beta chains form an alternating ring which encloses part of the gamma chain. F(1) is attached to F(0) by a central stalk formed by the gamma and epsilon chains, while a peripheral stalk is formed by the delta and b chains.

It localises to the cell membrane. In terms of biological role, f(1)F(0) ATP synthase produces ATP from ADP in the presence of a proton or sodium gradient. F-type ATPases consist of two structural domains, F(1) containing the extramembraneous catalytic core and F(0) containing the membrane proton channel, linked together by a central stalk and a peripheral stalk. During catalysis, ATP synthesis in the catalytic domain of F(1) is coupled via a rotary mechanism of the central stalk subunits to proton translocation. Component of the F(0) channel, it forms part of the peripheral stalk, linking F(1) to F(0). The protein is ATP synthase subunit b of Lactococcus lactis subsp. lactis (strain IL1403) (Streptococcus lactis).